The chain runs to 73 residues: Translational regulator CsrA (73 aa).

The protein belongs to the CsrA/RsmA family. In terms of assembly, homodimer; the beta-strands of each monomer intercalate to form a hydrophobic core, while the alpha-helices form wings that extend away from the core.

It localises to the cytoplasm. A translational regulator that binds mRNA to regulate translation initiation and/or mRNA stability. Usually binds in the 5'-UTR at or near the Shine-Dalgarno sequence preventing ribosome-binding, thus repressing translation. Its main target seems to be the major flagellin gene, while its function is anatagonized by FliW. The sequence is that of Translational regulator CsrA from Lachnospira eligens (strain ATCC 27750 / DSM 3376 / VPI C15-48 / C15-B4) (Eubacterium eligens).